Consider the following 296-residue polypeptide: Nucleotide-binding protein stu0831 (296 aa).

13 to 20 (GMSGAGKT) is an ATP binding site. 63-66 (DMRS) contributes to the GTP binding site.

This sequence belongs to the RapZ-like family.

In terms of biological role, displays ATPase and GTPase activities. In Streptococcus thermophilus (strain ATCC BAA-250 / LMG 18311), this protein is Nucleotide-binding protein stu0831.